Consider the following 207-residue polypeptide: Large ribosomal subunit protein uL4 (207 aa).

Positions 49-78 are disordered; it reads HAVKNRSAVSGGGRKPWRQKGTGRARQGSI.

It belongs to the universal ribosomal protein uL4 family. In terms of assembly, part of the 50S ribosomal subunit.

Its function is as follows. One of the primary rRNA binding proteins, this protein initially binds near the 5'-end of the 23S rRNA. It is important during the early stages of 50S assembly. It makes multiple contacts with different domains of the 23S rRNA in the assembled 50S subunit and ribosome. Forms part of the polypeptide exit tunnel. This is Large ribosomal subunit protein uL4 from Streptococcus sanguinis (strain SK36).